The following is a 637-amino-acid chain: Probable polypeptide N-acetylgalactosaminyltransferase 8 (637 aa).

Topologically, residues 1 to 6 are cytoplasmic; the sequence is MMFWRK. A helical; Signal-anchor for type II membrane protein membrane pass occupies residues 7 to 29; sequence LPKALFIGLTLAIAVNLLLVFSS. Topologically, residues 30 to 637 are lumenal; it reads KGTLQNLFTG…VRDWGQTNSQ (608 aa). 3 N-linked (GlcNAc...) asparagine glycosylation sites follow: Asn85, Asn107, and Asn160. Disulfide bonds link Cys171/Cys404, Cys395/Cys474, Cys509/Cys525, Cys556/Cys571, and Cys599/Cys617. The interval 180-294 is catalytic subdomain A; sequence LPSLSVILIF…VGWAEPILAR (115 aa). Positions 221 and 255 each coordinate substrate. Residues Asp278, His280, and His409 each contribute to the Mn(2+) site. A catalytic subdomain B region spans residues 351–412; the sequence is PVKSPSIMGI…PCSRIAHLER (62 aa). The substrate site is built by Arg412 and Tyr417. Positions 496–634 constitute a Ricin B-type lectin domain; the sequence is GYGRMKNLLD…QHTVRDWGQT (139 aa).

It belongs to the glycosyltransferase 2 family. GalNAc-T subfamily. Mn(2+) is required as a cofactor. Widely expressed. Expressed in heart, skeletal muscle, kidney, liver, small intestine and placenta. Weakly expressed in colon, thymus, spleen, lung and leukocyte.

Its subcellular location is the golgi apparatus membrane. The enzyme catalyses L-seryl-[protein] + UDP-N-acetyl-alpha-D-galactosamine = a 3-O-[N-acetyl-alpha-D-galactosaminyl]-L-seryl-[protein] + UDP + H(+). The catalysed reaction is L-threonyl-[protein] + UDP-N-acetyl-alpha-D-galactosamine = a 3-O-[N-acetyl-alpha-D-galactosaminyl]-L-threonyl-[protein] + UDP + H(+). It participates in protein modification; protein glycosylation. In terms of biological role, probably catalyzes the initial reaction in O-linked oligosaccharide biosynthesis, the transfer of an N-acetyl-D-galactosamine residue to a serine or threonine residue on the protein receptor. The sequence is that of Probable polypeptide N-acetylgalactosaminyltransferase 8 (GALNT8) from Homo sapiens (Human).